Consider the following 315-residue polypeptide: Transaldolase (315 aa).

Catalysis depends on Lys-125, which acts as the Schiff-base intermediate with substrate.

Belongs to the transaldolase family. Type 1 subfamily. Homodimer.

The protein localises to the cytoplasm. It catalyses the reaction D-sedoheptulose 7-phosphate + D-glyceraldehyde 3-phosphate = D-erythrose 4-phosphate + beta-D-fructose 6-phosphate. It functions in the pathway carbohydrate degradation; pentose phosphate pathway; D-glyceraldehyde 3-phosphate and beta-D-fructose 6-phosphate from D-ribose 5-phosphate and D-xylulose 5-phosphate (non-oxidative stage): step 2/3. Its function is as follows. Transaldolase is important for the balance of metabolites in the pentose-phosphate pathway. The chain is Transaldolase from Paracidovorax citrulli (strain AAC00-1) (Acidovorax citrulli).